A 550-amino-acid chain; its full sequence is CTP synthase (550 aa).

Residues 1-265 (MTKFIFVTGG…DEIVVEQLGL (265 aa)) form an amidoligase domain region. S13 serves as a coordination point for CTP. S13 is a binding site for UTP. An ATP-binding site is contributed by 14–19 (SLGKGI). Y54 lines the L-glutamine pocket. An ATP-binding site is contributed by D71. Mg(2+) contacts are provided by D71 and E139. Residues 146 to 148 (DIE), 186 to 191 (KTKPTQ), and K222 contribute to the CTP site. Residues 186 to 191 (KTKPTQ) and K222 contribute to the UTP site. Positions 290-541 (TITLVGKYVD…IRAAAEHRRR (252 aa)) constitute a Glutamine amidotransferase type-1 domain. G351 is a binding site for L-glutamine. Catalysis depends on C378, which acts as the Nucleophile; for glutamine hydrolysis. L-glutamine is bound by residues 379–382 (LGMQ), E402, and R469. Residues H514 and E516 contribute to the active site.

The protein belongs to the CTP synthase family. Homotetramer.

It catalyses the reaction UTP + L-glutamine + ATP + H2O = CTP + L-glutamate + ADP + phosphate + 2 H(+). The catalysed reaction is L-glutamine + H2O = L-glutamate + NH4(+). It carries out the reaction UTP + NH4(+) + ATP = CTP + ADP + phosphate + 2 H(+). The protein operates within pyrimidine metabolism; CTP biosynthesis via de novo pathway; CTP from UDP: step 2/2. Allosterically activated by GTP, when glutamine is the substrate; GTP has no effect on the reaction when ammonia is the substrate. The allosteric effector GTP functions by stabilizing the protein conformation that binds the tetrahedral intermediate(s) formed during glutamine hydrolysis. Inhibited by the product CTP, via allosteric rather than competitive inhibition. Functionally, catalyzes the ATP-dependent amination of UTP to CTP with either L-glutamine or ammonia as the source of nitrogen. Regulates intracellular CTP levels through interactions with the four ribonucleotide triphosphates. The polypeptide is CTP synthase (Nitrosococcus oceani (strain ATCC 19707 / BCRC 17464 / JCM 30415 / NCIMB 11848 / C-107)).